The primary structure comprises 955 residues: B3 domain-containing protein Os07g0563300 (955 aa).

Pro residues-rich tracts occupy residues 1–20 (MSSP…PPPS) and 29–45 (VQPP…PQQP). Disordered stretches follow at residues 1–81 (MSSP…QRPR) and 325–392 (ARKG…SSSL). Low complexity predominate over residues 62–71 (QHQQQQQGPP). Over residues 332–342 (DPCSSVSTTFK) the composition is skewed to polar residues. A compositionally biased stretch (basic and acidic residues) spans 343 to 355 (LDSHHPSILKDDP). Residues 382–392 (QQQQQMASSSL) are compositionally biased toward low complexity. A DNA-binding region (TF-B3) is located at residues 453 to 554 (FEKMLSASDA…KLVMGFRKAT (102 aa)). 2 stretches are compositionally biased toward polar residues: residues 556–565 (LSAEQDQPTK) and 598–608 (NTESKSSSPVE). The tract at residues 556 to 642 (LSAEQDQPTK…PLPVKRKATS (87 aa)) is disordered. The CW-type zinc finger occupies 708 to 758 (SGENHQWAQCEDCSKWRKLPVDALLPSKWTCSDNKWDSERSSCDSAQEINM). Positions 717, 720, 738, and 750 each coordinate Zn(2+). The disordered stretch occupies residues 856-955 (MMRREKRQQS…ATRLLRDNPT (100 aa)). A compositionally biased stretch (basic and acidic residues) spans 862 to 877 (RQQSEKDSGVPRKREP). Composition is skewed to polar residues over residues 878 to 900 (GQSS…SSPH) and 920 to 933 (TSSP…LNSQ). Residues 939-955 (EQSPKSDATRLLRDNPT) show a composition bias toward basic and acidic residues.

The protein resides in the nucleus. The polypeptide is B3 domain-containing protein Os07g0563300 (Oryza sativa subsp. japonica (Rice)).